Here is a 696-residue protein sequence, read N- to C-terminus: C2 domain-containing protein 2 (696 aa).

A helical membrane pass occupies residues 8-28 (VQWLFLVSLFVAALGTVGLYL). An SMP-LBD domain is found at 45 to 238 (EPDELRRRES…PTQVKEAQSL (194 aa)). At serine 54 the chain carries Phosphoserine. Residues 241-357 (PSSTAQEPCP…RKQPNGPQTF (117 aa)) enclose the C2 domain. Serine 436 is subject to Phosphoserine. Threonine 440 is modified (phosphothreonine). Residues 551–611 (ATEASATTPP…DGDELSESSL (61 aa)) are disordered. The span at 573-588 (KPRENDLDSWELEKES) shows a compositional bias: basic and acidic residues. Serine 581 carries the phosphoserine modification.

The protein resides in the membrane. The sequence is that of C2 domain-containing protein 2 from Mus musculus (Mouse).